The primary structure comprises 648 residues: RAF proto-oncogene serine/threonine-protein kinase (648 aa).

Ser-29 carries the phosphoserine; by MAPK1 modification. At Ser-43 the chain carries Phosphoserine; by PKA and MAPK1. An RBD domain is found at 56–131 (NTIRVFLPNK…IGEELQVDFL (76 aa)). The Phorbol-ester/DAG-type zinc-finger motif lies at 138–184 (THNFARKTFLKLAFCDICQKFLLNGFRCQTCGYKFHEHCSTKVPTMC). Zn(2+) contacts are provided by His-139, Cys-152, Cys-155, Cys-165, Cys-168, His-173, Cys-176, and Cys-184. The disordered stretch occupies residues 205–265 (GVPAPPSFPM…RSTSTPNVHM (61 aa)). A Phosphoserine; by PKA modification is found at Ser-233. Residues 239–265 (TFNTSSPSSEGSLSQRQRSTSTPNVHM) are compositionally biased toward polar residues. Residue Ser-252 is modified to Phosphoserine. Ser-259 carries the post-translational modification Phosphoserine; by PKA, PKC and PKB/AKT1. Thr-268 bears the Phosphothreonine; by autocatalysis mark. At Thr-269 the chain carries Phosphothreonine; by PKA. The disordered stretch occupies residues 281–335 (IRSHSESASPSALSSSPNNLSPTGWSQPKTPVPAQRERAPGSGTQEKNKIRPRGQ). Residues 286–301 (ESASPSALSSSPNNLS) show a composition bias toward low complexity. A phosphoserine; by MAPK1 mark is found at Ser-289, Ser-296, and Ser-301. Residues 331-349 (RPRGQRDSSYYWEIEASEV) form an interaction with PEBP1/RKIP region. Ser-338 carries the phosphoserine; by PAK1, PAK2, PAK3 and PAK5 modification. Phosphoserine; by PAK1, PAK2 and PAK3 is present on Ser-339. Residues Tyr-340 and Tyr-341 each carry the phosphotyrosine; by SRC modification. The region spanning 349–609 (VMLSTRIGSG…PQILSSIELL (261 aa)) is the Protein kinase domain. Residues 355 to 363 (IGSGSFGTV) and Lys-375 each bind ATP. Asp-468 (proton acceptor) is an active-site residue. Ser-471 is subject to Phosphoserine. The residue at position 491 (Thr-491) is a Phosphothreonine. Position 494 is a phosphoserine (Ser-494). Phosphoserine; by PKC occurs at positions 497 and 499. Arg-563 bears the Symmetric dimethylarginine; by PRMT5 mark. Ser-621 bears the Phosphoserine mark. The residue at position 642 (Ser-642) is a Phosphoserine; by MAPK1.

It belongs to the protein kinase superfamily. TKL Ser/Thr protein kinase family. RAF subfamily. Monomer. Homodimer. Heterodimerizes with BRAF and this heterodimer possesses a highly increased kinase activity compared to the respective homodimers or monomers. Heterodimerization is mitogen-regulated and enhanced by 14-3-3 proteins. MAPK1/ERK2 activation can induce a negative feedback that promotes the dissociation of the heterodimer. Forms a multiprotein complex with Ras (M-Ras/MRAS), SHOC2 and protein phosphatase 1 (PPP1CA, PPP1CB and PPP1CC). Interacts with LZTR1. Interacts with Ras proteins; the interaction is antagonized by RIN1. Weakly interacts with RIT1. Interacts (via N-terminus) with RGS14 (via RBD domains); the interaction mediates the formation of a ternary complex with BRAF, a ternary complex inhibited by GNAI1. Probably forms a complex composed of chaperones HSP90 and HSP70, co-chaperones CDC37, PPP5C, TSC1 and client protein TSC2, CDK4, AKT, RAF1 and NR3C1; this complex does not contain co-chaperones STIP1/HOP and PTGES3/p23. Interacts with STK3/MST2; the interaction inhibits its pro-apoptotic activity. Interacts (when phosphorylated at Ser-259) with YWHAZ (unphosphorylated at 'Thr-232'). Interacts with MAP2K1/MEK1 and MAP2K2/MEK2. Interacts with MAP3K5/ASF1 (via N-terminus) and this interaction inhibits the proapoptotic function of MAP3K5/ASK1. Interacts with PAK1 (via kinase domain). The Ser-338 and Ser-339 phosphorylated form (by PAK1) interacts with BCL2. Interacts with PEBP1/RKIP and this interaction is enhanced if RAF1 is phosphorylated on residues Ser-338, Ser-339, Tyr-340 and Tyr-341. Interacts with ADCY2, ADCY5, ADCY6, DGKH, RCAN1/DSCR1, PPP1R12A, PKB/AKT1, SPRY2, SPRY4, CNKSR1/CNK1, KSR2 and PHB/prohibitin. The phosphorylated form interacts with PIN1. Interacts with PPP2CA, PPP2R1B and ROCK2. In its active form, interacts with PRMT5. Interacts with FAM83B; displaces 14-3-3 proteins from RAF1 and activates RAF1. Interacts with PDE8A; the interaction promotes RAF1 activity. Interacts with MFHAS1. Interacts with GLS. Interacts with NEK10 and MAP2K1; the interaction is direct with NEK10 and required for ERK1/2-signaling pathway activation in response to UV irradiation. Zn(2+) is required as a cofactor. Phosphorylation at Thr-269, Ser-338, Tyr-341, Thr-491 and Ser-494 results in its activation. Phosphorylation at Ser-29, Ser-43, Ser-289, Ser-296, Ser-301 and Ser-642 by MAPK1/ERK2 results in its inactivation. Phosphorylation at Ser-259 induces the interaction with YWHAZ and inactivates kinase activity. Dephosphorylation of Ser-259 by the SHOC2-MRAS-PP1c (SMP) complex consisting of SHOC2, GTP-bound M-Ras/MRAS and the catalytic subunit of protein phosphatase 1 (PPP1CA, PPP1CB or PPP1CC); this relieves inactivation and stimulates kinase activity. Phosphorylation at Ser-338 by PAK1 and PAK5 and Ser-339 by PAK1 is required for its mitochondrial localization. Phosphorylation at Ser-621 in response to growth factor treatment stabilizes the protein, possibly by preventing proteasomal degradation. Phosphorylation at Ser-289, Ser-296, Ser-301, Ser-338 and Ser-621 are somehow linked to the methylation potential of cells. Treatment of cells with HGF in the presence of the methylation inhibitor 5'-methylthioadenosine (MTA) results in increased phosphorylation at Ser-338 and Ser-621 and decreased phosphorylation at Ser-296, Ser-301 and Ser-338. Dephosphorylation at Ser-338 by PPP5C results in a decreased of activity. Post-translationally, methylated at Arg-563 in response to EGF treatment. This modification leads to destabilization of the protein, possibly through proteasomal degradation. Present in all tissues tested: testis, ovary, small intestine, colon, peripheral blood leukocytes, fetal liver, bone marrow, thymus, lymph node and spleen, and the cell lines melanoma G-361, lung carcinoma A-549, colorectal adenocarcinoma SW480, Burkitt's lymphoma Raji and lymphoblastic leukemia MOLT-4. In skeletal muscle, isoform 1 is more abundant than isoform 2.

The protein resides in the cytoplasm. It is found in the cell membrane. The protein localises to the mitochondrion. Its subcellular location is the nucleus. It carries out the reaction L-seryl-[protein] + ATP = O-phospho-L-seryl-[protein] + ADP + H(+). It catalyses the reaction L-threonyl-[protein] + ATP = O-phospho-L-threonyl-[protein] + ADP + H(+). Regulation is a highly complex process involving membrane recruitment, protein-protein interactions, dimerization, and phosphorylation/dephosphorylation events. Ras-GTP recruits RAF1 to the membrane, thereby promoting its activation. The inactive conformation of RAF1 is maintained by autoinhibitory interactions occurring between the N-terminal regulatory and the C-terminal catalytic domains and by the binding of a 14-3-3 protein that contacts two phosphorylation sites, Ser-259 and Ser-621. Upon mitogenic stimulation, Ras and PPP2R1A cooperate to release autoinhibition and the subsequent phosphorylation of activating sites: Ser-338, Tyr-341, Thr-491, and Ser-494, yields a fully active kinase. Through a negative feedback mechanism involving MAPK1/ERK2, RAF1 is phosphorylated on Ser-29, Ser-43, Ser-289, Ser-296, Ser-301 and Ser-642 by MAPK1/ERK2, which yields an inactive, desensitized kinase. The signaling-competent conformation of RAF1 is finally re-established by the coordinated action of PIN1, a prolyl isomerase that converts pSer and pThr residues from the cis to the trans conformation, which is preferentially recognized and dephosphorylated by PPP2R1A. Activated by homodimerization and heterodimerization (with BRAF). Also regulated through association with other proteins such as KSR2, CNKSR1/CNK1, PEBP1/RKIP, PHB/prohibitin and SPRY4. PEBP1/RKIP acts by dissociating RAF1 from its substrates MAP2K1/MEK1 and MAP2K2/MEK2. PHB/prohibitin facilitates the displacement of 14-3-3 from RAF1 by activated Ras, thereby promoting cell membrane localization and phosphorylation of RAF1 at the activating Ser-338. SPRY4 inhibits Ras-independent, but not Ras-dependent, activation of RAF1. CNKSR1/CNK1 regulates Src-mediated RAF1 activation. In terms of biological role, serine/threonine-protein kinase that acts as a regulatory link between the membrane-associated Ras GTPases and the MAPK/ERK cascade, and this critical regulatory link functions as a switch determining cell fate decisions including proliferation, differentiation, apoptosis, survival and oncogenic transformation. RAF1 activation initiates a mitogen-activated protein kinase (MAPK) cascade that comprises a sequential phosphorylation of the dual-specific MAPK kinases (MAP2K1/MEK1 and MAP2K2/MEK2) and the extracellular signal-regulated kinases (MAPK3/ERK1 and MAPK1/ERK2). The phosphorylated form of RAF1 (on residues Ser-338 and Ser-339, by PAK1) phosphorylates BAD/Bcl2-antagonist of cell death at 'Ser-75'. Phosphorylates adenylyl cyclases: ADCY2, ADCY5 and ADCY6, resulting in their activation. Phosphorylates PPP1R12A resulting in inhibition of the phosphatase activity. Phosphorylates TNNT2/cardiac muscle troponin T. Can promote NF-kB activation and inhibit signal transducers involved in motility (ROCK2), apoptosis (MAP3K5/ASK1 and STK3/MST2), proliferation and angiogenesis (RB1). Can protect cells from apoptosis also by translocating to the mitochondria where it binds BCL2 and displaces BAD/Bcl2-antagonist of cell death. Plays a role in the oncogenic transformation of epithelial cells via repression of the TJ protein, occludin (OCLN) by inducing the up-regulation of a transcriptional repressor SNAI2/SLUG, which induces down-regulation of OCLN. Restricts caspase activation in response to selected stimuli, notably Fas stimulation, pathogen-mediated macrophage apoptosis, and erythroid differentiation. Regulates Rho signaling and migration, and is required for normal wound healing. The chain is RAF proto-oncogene serine/threonine-protein kinase (Raf1) from Mus musculus (Mouse).